Here is a 430-residue protein sequence, read N- to C-terminus: Pre-mRNA-processing protein 45 (430 aa).

Residues 1–26 (MSFRTLSSLLPSPQNSEVSESSAFSR) are compositionally biased toward polar residues. Disordered stretches follow at residues 1 to 28 (MSFR…SRQS), 280 to 299 (MERN…NKMS), and 370 to 430 (PTTG…PHTS).

It belongs to the SNW family. Associated with the spliceosome.

It localises to the nucleus. In terms of biological role, involved in pre-mRNA splicing. The sequence is that of Pre-mRNA-processing protein 45 (PRP45) from Kluyveromyces lactis (strain ATCC 8585 / CBS 2359 / DSM 70799 / NBRC 1267 / NRRL Y-1140 / WM37) (Yeast).